The primary structure comprises 488 residues: Probable glycine dehydrogenase (decarboxylating) subunit 2 (488 aa).

Lys274 bears the N6-(pyridoxal phosphate)lysine mark.

Belongs to the GcvP family. C-terminal subunit subfamily. As to quaternary structure, the glycine cleavage system is composed of four proteins: P, T, L and H. In this organism, the P 'protein' is a heterodimer of two subunits. Pyridoxal 5'-phosphate is required as a cofactor.

It carries out the reaction N(6)-[(R)-lipoyl]-L-lysyl-[glycine-cleavage complex H protein] + glycine + H(+) = N(6)-[(R)-S(8)-aminomethyldihydrolipoyl]-L-lysyl-[glycine-cleavage complex H protein] + CO2. Functionally, the glycine cleavage system catalyzes the degradation of glycine. The P protein binds the alpha-amino group of glycine through its pyridoxal phosphate cofactor; CO(2) is released and the remaining methylamine moiety is then transferred to the lipoamide cofactor of the H protein. The protein is Probable glycine dehydrogenase (decarboxylating) subunit 2 of Listeria welshimeri serovar 6b (strain ATCC 35897 / DSM 20650 / CCUG 15529 / CIP 8149 / NCTC 11857 / SLCC 5334 / V8).